The chain runs to 102 residues: NADH-quinone oxidoreductase subunit K (102 aa).

3 consecutive transmembrane segments (helical) span residues 6–26 (LGQGLLLAAILFALGLVGVLV), 30–50 (LLFMLMSLEVMLNAAGVAFIV), and 64–84 (FILVLTLAAAEVSVGLALILL).

This sequence belongs to the complex I subunit 4L family. NDH-1 is composed of 14 different subunits. Subunits NuoA, H, J, K, L, M, N constitute the membrane sector of the complex.

Its subcellular location is the cell inner membrane. The enzyme catalyses a quinone + NADH + 5 H(+)(in) = a quinol + NAD(+) + 4 H(+)(out). Its function is as follows. NDH-1 shuttles electrons from NADH, via FMN and iron-sulfur (Fe-S) centers, to quinones in the respiratory chain. The immediate electron acceptor for the enzyme in this species is believed to be ubiquinone. Couples the redox reaction to proton translocation (for every two electrons transferred, four hydrogen ions are translocated across the cytoplasmic membrane), and thus conserves the redox energy in a proton gradient. The protein is NADH-quinone oxidoreductase subunit K of Acidiphilium cryptum (strain JF-5).